The sequence spans 76 residues: Conotoxin Lt6.1 (76 aa).

A signal peptide spans 1–22 (MKLTCVLIIAVLFLMDNQLITA). A propeptide spanning residues 23-48 (DYPRDEQVYRAVRLRDAMQKSKGSGS) is cleaved from the precursor. 3 disulfides stabilise this stretch: Cys49–Cys62, Cys56–Cys67, and Cys61–Cys75.

This sequence belongs to the conotoxin O1 superfamily. Expressed by the venom duct.

The protein localises to the secreted. The polypeptide is Conotoxin Lt6.1 (Conus litteratus (Lettered cone)).